We begin with the raw amino-acid sequence, 204 residues long: Thymidylate kinase (204 aa).

It belongs to the thymidylate kinase family. In terms of assembly, homodimer; the dimer arrangement is orthogonal and not antiparallel as in human enzyme.

The enzyme catalyses dTMP + ATP = dTDP + ADP. Its pathway is pyrimidine metabolism; dTTP biosynthesis. Poxvirus TMP kinase is able to phosphorylate dTMP, dUMP and also dGMP from any purine and pyrimidine nucleoside triphosphate. The large substrate specificity is explained by the presence of a canal connecting the edge of the dimer interface to the TMP base binding pocket, canal not found in the human homolog. The polypeptide is Thymidylate kinase (OPG178) (Cynomys gunnisoni (Gunnison's prairie dog)).